Consider the following 426-residue polypeptide: Vitamin D3 receptor (426 aa).

The segment at residues 21–96 (PRICGVCGDR…IGMMKEFILT (76 aa)) is a DNA-binding region (nuclear receptor). Zn(2+)-binding residues include cysteine 24, cysteine 27, cysteine 41, cysteine 44, cysteine 60, cysteine 66, cysteine 76, and cysteine 79. 2 consecutive NR C4-type zinc fingers follow at residues 24-44 (CGVC…CEGC) and 60-84 (CPFN…LKRC). Positions 97–126 (DEEVQRKREMILKRKEEEALKDSLRPKLSE) are hinge. The NR LBD domain occupies 127-422 (EQQRIITTLL…LTPLLFEVFG (296 aa)). Calcitriol is bound at residue tyrosine 143. Residues 147 to 215 (YSDFSQFRPP…NEEDSDDPSV (69 aa)) form a disordered region. Residues 175-191 (SFSGNSSSSCSDHCTSS) show a composition bias toward low complexity. Over residues 192-204 (PDTMEPTSFSNQD) the composition is skewed to polar residues. Serine 235 is a binding site for calcitriol. The interaction with coactivator LXXLL motif stretch occupies residues 244–262 (KMIPGFRDLTPEDQIVLLK). 4 residues coordinate calcitriol: arginine 272, serine 276, histidine 304, and histidine 396. The short motif at 415 to 423 (PLLFEVFGN) is the 9aaTAD element.

It belongs to the nuclear hormone receptor family. NR1 subfamily. As to quaternary structure, homodimer in the absence of bound vitamin D3. Heterodimer with RXRA after vitamin D3 binding. Interacts with MED1, NCOA1, NCOA2, NCOA3 and NCOA6 coactivators, leading to a strong increase of transcription of target genes. Interacts with the corepressor NCOR1. Interacts with SNW1. Interacts with IRX4, the interaction does not affect its transactivation activity. Interacts with CRY1. Interacts with CRY2 in a ligand-dependent manner. In terms of processing, ubiquitinated by UBR5, leading to its degradation: UBR5 specifically recognizes and binds ligand-bound VDR when it is not associated with coactivators (NCOAs). In presence of NCOAs, the UBR5-degron is not accessible, preventing its ubiquitination and degradation. Mammary gland, expression increases during lactation. Also found in colon, expression is down-regulated at parturition.

The protein localises to the nucleus. Its subcellular location is the cytoplasm. Nuclear receptor for calcitriol, the active form of vitamin D3 which mediates the action of this vitamin on cells. Enters the nucleus upon vitamin D3 binding where it forms heterodimers with the retinoid X receptor/RXR. The VDR-RXR heterodimers bind to specific response elements on DNA and activate the transcription of vitamin D3-responsive target genes. Plays a central role in calcium homeostasis. Also functions as a receptor for the secondary bile acid lithocholic acid (LCA) and its metabolites. The chain is Vitamin D3 receptor (VDR) from Bos taurus (Bovine).